The sequence spans 253 residues: Indole-3-glycerol phosphate synthase (253 aa).

Belongs to the TrpC family.

It carries out the reaction 1-(2-carboxyphenylamino)-1-deoxy-D-ribulose 5-phosphate + H(+) = (1S,2R)-1-C-(indol-3-yl)glycerol 3-phosphate + CO2 + H2O. Its pathway is amino-acid biosynthesis; L-tryptophan biosynthesis; L-tryptophan from chorismate: step 4/5. The sequence is that of Indole-3-glycerol phosphate synthase from Bacillus mycoides (strain KBAB4) (Bacillus weihenstephanensis).